The following is a 464-amino-acid chain: Glutamate decarboxylase beta (464 aa).

Lys-275 carries the N6-(pyridoxal phosphate)lysine modification.

The protein belongs to the group II decarboxylase family. Requires pyridoxal 5'-phosphate as cofactor.

The enzyme catalyses L-glutamate + H(+) = 4-aminobutanoate + CO2. In terms of biological role, converts internalized glutamate to GABA and increases the internal pH. Involved in glutamate-dependent acid resistance in gastric fluid. The chain is Glutamate decarboxylase beta (gadB) from Listeria monocytogenes serovar 1/2a (strain ATCC BAA-679 / EGD-e).